The primary structure comprises 354 residues: Arginase (354 aa).

4 residues coordinate Mn(2+): His-136, Asp-159, His-161, and Asp-163. L-arginine-binding residues include Asn-165, Ser-172, and Asp-217. The Mn(2+) site is built by Asp-266 and Asp-268.

It belongs to the arginase family. In terms of assembly, homotrimer; oligomerization is dependent on Mn(2+) binding. Mn(2+) serves as cofactor.

The catalysed reaction is L-arginine + H2O = urea + L-ornithine. Its pathway is nitrogen metabolism; urea cycle; L-ornithine and urea from L-arginine: step 1/1. In terms of biological role, catalyzes the hydrolysis of L-arginine into urea and L-ornithine, which is a precursor for polyamine biosynthesis. May play a role in parasite intra-hepatic development during the host liver stage. This Plasmodium berghei (strain Anka) protein is Arginase.